We begin with the raw amino-acid sequence, 309 residues long: Bombesin receptor-activated protein C6orf89 homolog (309 aa).

The Cytoplasmic portion of the chain corresponds to 1 to 59 (MGSSLSEPCIYDKLSESIDILRQSGYRYGMSEREIEKFIKQVLETNEPRREPPQFPILR). Residues 60 to 80 (ATVKFVVAVGVVLMAVLVFTY) form a helical membrane-spanning segment. Residues 81-309 (PQSPVLMGSV…QDVQCDSAVL (229 aa)) are Extracellular-facing.

Homodimer.

The protein localises to the golgi apparatus membrane. The protein resides in the cytoplasm. In terms of biological role, exhibits histone deacetylase (HDAC) enhancer properties. May play a role in progression through the cell cycle. In Danio rerio (Zebrafish), this protein is Bombesin receptor-activated protein C6orf89 homolog.